A 632-amino-acid polypeptide reads, in one-letter code: MGTLQEKVRRFQKKTITELRDRQNADGSWTFCFEGPIMTNSFFILLLTSLDEGENEKELISSLAAGIHAKQQPDGTFINYPDETRGNLTATVQGYVGMLASGCFHRTEPHMKKAEQFIISHGGLRHVHFMTKWMLAANGLYPWPALYLPLSLMALPPTLPIHFYQFSSYARIHFAPMAVTLNQRFVLINRNISSLHHLDPHMTKNPFTWLRSDAFEERDLTSILLHWKRVFHAPFAFQQLGLQTAKTYMLDRIEKDGTLYSYASATIYMVYSLLSLGVSRYSPIIRRAITGIKSLVTKCNGIPYLENSTSTVWDTALISYALQKNGVTETDGSVTKAADFLLERQHTKIADWSVKNPNSVPGGWGFSNINTNNPDCDDTTAVLKAIPRNHSPAAWERGVSWLLSMQNNDGGFSAFEKNVNHPLIRLLPLESAEDAAVDPSTADLTGRVLHFLGEKVGFTEKHQHIQRAVKWLFEHQEQNGSWYGRWGVCYIYGTWAALTGMHACGVDRKHPGIQKALRWLKSIQNDDGSWGESCKSAEIKTYVPLHRGTIVQTAWALDALLTYENSEHPSVVKGMQYLTDSSSHSADSLAYPAGIGLPKQFYIRYHSYPYVFSLLAVGKYLDSIEKETANET.

Aspartate 377 acts as the Proton donor in catalysis. PFTB repeat units follow at residues 395 to 436, 465 to 505, and 513 to 554; these read WERG…EDAA, IQRA…HACG, and IQKA…VQTA.

Belongs to the terpene cyclase/mutase family.

It localises to the cell membrane. It carries out the reaction sporulenol = (R)-tetraprenyl-beta-curcumene + H2O. The protein operates within secondary metabolite biosynthesis; hopanoid biosynthesis. In terms of biological role, catalyzes the cyclization of tetraprenyl beta-curcumene into sporulenol. In Bacillus subtilis (strain 168), this protein is Sporulenol synthase (sqhC).